We begin with the raw amino-acid sequence, 175 residues long: Translation initiation factor IF-3 (175 aa).

It belongs to the IF-3 family. In terms of assembly, monomer.

It localises to the cytoplasm. In terms of biological role, IF-3 binds to the 30S ribosomal subunit and shifts the equilibrium between 70S ribosomes and their 50S and 30S subunits in favor of the free subunits, thus enhancing the availability of 30S subunits on which protein synthesis initiation begins. The chain is Translation initiation factor IF-3 from Staphylococcus aureus (strain MRSA252).